Reading from the N-terminus, the 186-residue chain is Two-component response regulator ARR6 (186 aa).

Residues 26-153 (HVLAVDDSHV…DVKRLRDSLM (128 aa)) form the Response regulatory domain. Asp-86 is modified (4-aspartylphosphate).

It belongs to the ARR family. Type-A subfamily. Two-component system major event consists of a His-to-Asp phosphorelay between a sensor histidine kinase (HK) and a response regulator (RR). In plants, the His-to-Asp phosphorelay involves an additional intermediate named Histidine-containing phosphotransfer protein (HPt). This multistep phosphorelay consists of a His-Asp-His-Asp sequential transfer of a phosphate group between first a His and an Asp of the HK protein, followed by the transfer to a conserved His of the HPt protein and finally the transfer to an Asp in the receiver domain of the RR protein. In terms of tissue distribution, predominantly expressed in roots.

It is found in the nucleus. Functions as a response regulator involved in His-to-Asp phosphorelay signal transduction system. Phosphorylation of the Asp residue in the receiver domain activates the ability of the protein to promote the transcription of target genes. Type-A response regulators seem to act as negative regulators of the cytokinin signaling. The protein is Two-component response regulator ARR6 (ARR6) of Arabidopsis thaliana (Mouse-ear cress).